We begin with the raw amino-acid sequence, 261 residues long: Thiazole synthase (261 aa).

Lys-101 (schiff-base intermediate with DXP) is an active-site residue. Residues Gly-162, 188-189, and 210-211 each bind 1-deoxy-D-xylulose 5-phosphate; these read AG and NT.

This sequence belongs to the ThiG family. Homotetramer. Forms heterodimers with either ThiH or ThiS.

The protein resides in the cytoplasm. The catalysed reaction is [ThiS sulfur-carrier protein]-C-terminal-Gly-aminoethanethioate + 2-iminoacetate + 1-deoxy-D-xylulose 5-phosphate = [ThiS sulfur-carrier protein]-C-terminal Gly-Gly + 2-[(2R,5Z)-2-carboxy-4-methylthiazol-5(2H)-ylidene]ethyl phosphate + 2 H2O + H(+). Its pathway is cofactor biosynthesis; thiamine diphosphate biosynthesis. Catalyzes the rearrangement of 1-deoxy-D-xylulose 5-phosphate (DXP) to produce the thiazole phosphate moiety of thiamine. Sulfur is provided by the thiocarboxylate moiety of the carrier protein ThiS. In vitro, sulfur can be provided by H(2)S. This chain is Thiazole synthase, found in Azoarcus sp. (strain BH72).